A 419-amino-acid polypeptide reads, in one-letter code: Effector protein BipC (419 aa).

Disordered stretches follow at residues 62–91 (VAGS…TVSG) and 338–402 (LQSG…AKSQ). 2 stretches are compositionally biased toward basic and acidic residues: residues 71–91 (ELAR…TVSG) and 380–392 (TRDE…REAA).

The protein belongs to the SctB/SipC family.

It is found in the secreted. The polypeptide is Effector protein BipC (bipC) (Burkholderia mallei (strain NCTC 10247)).